The primary structure comprises 654 residues: Pyoverdine export ATP-binding/permease protein PvdT (654 aa).

One can recognise an ABC transporter domain in the interval 6–245; the sequence is IELCDIRKAY…QPEQLQANDL (240 aa). 43–50 contributes to the ATP binding site; that stretch reads GASGSGKS. Transmembrane regions (helical) follow at residues 282–302, 529–549, 596–616, and 617–637; these read ALTL…LAVG, LSLM…IGVM, IVIA…VAFA, and LPAI…FGFM.

The protein belongs to the ABC transporter superfamily. Macrolide exporter (TC 3.A.1.122) family. In terms of assembly, part of the tripartite efflux system PvdRT-OpmQ, which is composed of an inner membrane component with both ATPase and permease domains, PvdT, a periplasmic membrane fusion protein, PvdR, and an outer membrane component, OpmQ.

It localises to the cell inner membrane. Part of the tripartite efflux system PvdRT-OpmQ required for the secretion into the extracellular milieu of the siderophore pyoverdine (PVD), which is involved in iron acquisition. This subunit binds PVD and drives its secretion by hydrolyzing ATP. The system is responsible for export of newly synthesized PVD after the final steps of biosynthesis have taken place in the periplasm. It is also responsible for recycling of PVD after internalization of ferri-PVD into the periplasm by the outer-membrane receptor FpvA and release of iron from PVD, thus making PVD available for new cycles of iron uptake. The polypeptide is Pyoverdine export ATP-binding/permease protein PvdT (Pseudomonas entomophila (strain L48)).